The primary structure comprises 284 residues: Shikimate dehydrogenase (NADP(+)) (284 aa).

Shikimate is bound by residues 20–22 (SIS) and Ser67. Lys71 (proton acceptor) is an active-site residue. Asp83 contributes to the NADP(+) binding site. Residues Asn92 and Asp107 each contribute to the shikimate site. Residues 129–133 (GAGGA) and Ile227 each bind NADP(+). Tyr229 is a binding site for shikimate. Residue Gly250 coordinates NADP(+).

The protein belongs to the shikimate dehydrogenase family. As to quaternary structure, homodimer.

It carries out the reaction shikimate + NADP(+) = 3-dehydroshikimate + NADPH + H(+). It participates in metabolic intermediate biosynthesis; chorismate biosynthesis; chorismate from D-erythrose 4-phosphate and phosphoenolpyruvate: step 4/7. Its function is as follows. Involved in the biosynthesis of the chorismate, which leads to the biosynthesis of aromatic amino acids. Catalyzes the reversible NADPH linked reduction of 3-dehydroshikimate (DHSA) to yield shikimate (SA). The polypeptide is Shikimate dehydrogenase (NADP(+)) (Streptococcus pneumoniae (strain ATCC 700669 / Spain 23F-1)).